Reading from the N-terminus, the 387-residue chain is MNQNIEKRLFTSESVSEGHPDKICDQISDAILDEVLKQDKNAKVACEVFTTTNYLLIGGQISSTAIVDYEQVARDVLKKIGYVDDAYGINANTCKIDIKIESQSPDIAQGVELSNDQIGAGDQGIMFGYATNESKTYLPLAITIAHELVYNATSQRKKGLFKWARPDMKSQVTIDYTNINNPKIDTILMSIQHDPNYNEIEFKKYIKENIMDLVAKEFNLNTDFKVLINPTGRFVIGGPQGDTGLTGRKIIADTYGGYSRHGGGAFSGKDSTKVDRSAAYMCRYVAKNLVAAGLADKIEIQVSYAIGISQPISIFIETFNTHKVDLNTIYKAVYENFDFSVSSMIKTLDLKKPIFFKTSKYGHFGKKDLSWEKLDKIEVLKEYKKCS.

An ATP-binding site is contributed by histidine 19. Position 21 (aspartate 21) interacts with Mg(2+). Glutamate 47 is a K(+) binding site. Glutamine 103 contacts L-methionine. The tract at residues 103-113 is flexible loop; that stretch reads QSPDIAQGVEL. ATP contacts are provided by residues 167-169, 233-234, aspartate 242, 248-249, alanine 265, and lysine 269; these read DMK, RF, and RK. Position 242 (aspartate 242) interacts with L-methionine. Lysine 273 is a binding site for L-methionine.

This sequence belongs to the AdoMet synthase family. In terms of assembly, homotetramer; dimer of dimers. The cofactor is Mg(2+). Requires K(+) as cofactor.

It localises to the cytoplasm. It carries out the reaction L-methionine + ATP + H2O = S-adenosyl-L-methionine + phosphate + diphosphate. It participates in amino-acid biosynthesis; S-adenosyl-L-methionine biosynthesis; S-adenosyl-L-methionine from L-methionine: step 1/1. Catalyzes the formation of S-adenosylmethionine (AdoMet) from methionine and ATP. The overall synthetic reaction is composed of two sequential steps, AdoMet formation and the subsequent tripolyphosphate hydrolysis which occurs prior to release of AdoMet from the enzyme. The sequence is that of S-adenosylmethionine synthase from Mycoplasma capricolum subsp. capricolum (strain California kid / ATCC 27343 / NCTC 10154).